The primary structure comprises 539 residues: Acrosin-binding protein (539 aa).

Positions 1–25 (MRQLAAGSLLSLLKVLLLPLAPAPA) are cleaved as a signal peptide. The tract at residues 26 to 106 (QDANSASTPG…ASWFESFCQF (81 aa)) is pro-ACR binding. Residues 26–269 (QDANSASTPG…NPFSFTPRVR (244 aa)) constitute a propeptide, removed in active form. Residues 186-259 (LGGQEQGQEH…PKFQSEFVSS (74 aa)) form a disordered region. Over residues 192–211 (GQEHKQEHKQEQGQEHKQDE) the composition is skewed to basic and acidic residues. Residues 212-238 (GQEQEEQEEEQEEEGKQEEGQGTEESL) show a composition bias toward acidic residues. A pro-ACR binding region spans residues 315-423 (LPHVDALLVL…TQIGTLKSGR (109 aa)).

In terms of assembly, binds specifically to the 55- and 53-kDa proacrosins and the 49-kDa acrosin intermediate, but is not capable of binding 43-kDa acrosin intermediate and 32-kDa mature acrosin. The N-terminus is blocked. Post-translationally, synthesized as a 60-kDa precursor, the 35-kDa mature form is post-translationally produced by the removal of the N-terminal half of the precursor during sperm maturation in the testis and/or epididymis. In terms of processing, phosphorylated on Tyr residues in capacitated sperm. Specifically expressed in testis.

The protein localises to the secreted. It is found in the cytoplasmic vesicle. It localises to the secretory vesicle. Its subcellular location is the acrosome. Its function is as follows. Acrosomal protein that maintains proacrosin (pro-ACR) as an enzymatically inactive zymogen in the acrosome. Involved also in the acrosome formation. The protein is Acrosin-binding protein of Sus scrofa (Pig).